We begin with the raw amino-acid sequence, 165 residues long: Protein OPG091 (165 aa).

This sequence belongs to the orthopoxvirus OPG091 family.

It is found in the virion. The protein resides in the host cytoplasm. In terms of biological role, contributes to vaccinia virus virulence in mice but not to replication in cell culture. This chain is Protein OPG091 (OPG091), found in Homo sapiens (Human).